Reading from the N-terminus, the 181-residue chain is uncharacterized protein (181 aa).

Gly residues-rich tracts occupy residues 143–156 and 170–181; these read RRGG…GPRG and GPFGPGYRGPRF. The interval 143 to 181 is disordered; sequence RRGGRYGDFGGPRGPRGPRNDGPFGPFGPFGPGYRGPRF.

As to quaternary structure, has been detected in a cytochrome bc1-aa3 supercomplex; its deletion however leaves complex activity unaffected.

This is an uncharacterized protein from Corynebacterium glutamicum (strain ATCC 13032 / DSM 20300 / JCM 1318 / BCRC 11384 / CCUG 27702 / LMG 3730 / NBRC 12168 / NCIMB 10025 / NRRL B-2784 / 534).